An 82-amino-acid chain; its full sequence is UPF0180 protein BT9727_1277 (82 aa).

The protein belongs to the UPF0180 family.

In Bacillus thuringiensis subsp. konkukian (strain 97-27), this protein is UPF0180 protein BT9727_1277.